A 1246-amino-acid polypeptide reads, in one-letter code: MASFPSPPLAAAAAAAPPRLAPGLPLAAAAVRRPSSLARRSSIALAAPANPLRCIHRRAVSPRLRRRTEAVGAASAAIGSLGEEREGCLSCFPRGRRRGRPGLARFAPCALPHTYGLSSLHSGLTGAKIRRRHVLHAAGPDEPHVASPTWSETALDKHYVDQPIGKEELEGFLNTPLPSHPKLVRGQLKNGLRYLILPNKVPANRFEAHMEVHVGSIDEEEDEQGIAHMIEHVAFLGSKKREKLLGTGARSNAYTDFHHTVFHIHSPTKTKEYGEDLLPSVLDALNEIAFHPKFSSSRVEKERRAILSELQMMNTIEYRVDCQLLQHLHSENKLSERFPIGLEEQIHKWDPDKIRRFHERWYYPANATLYLVGEINDIPRAIREIEAVFEHTLPEGEAAPMSTASPFGAMASLFAPKLPGGLAASLTGERSPAADKIKPVKRERQAIRPPVEHKWSLPGVAQDAKPPAIFQHELIQSFSINMFCKIPVNQVQTYKDLRSVLMKRIFLSALHFRINTRYKSSNPPFTSVELDHSDSGREGCTVTTLTVTAEPQNWRSAIKVAVHEVRRLKEFGVTMGEMTRYMDALIKDSEQLAMMIDSVPSVDNLDFIMESDALRHTVMDQLQGHESLLAVAETVTLEEVNTVGAEVLEFISDYGKPDAPLPAAIVACVPKKVHMDGVGETDFEIHPEEITDSIKAGLEEPIYPEPELEVPKELITQSELEDLKLQRKPSFASLSKEENVVKIFDDETGIAQRRLSNGISINYKITQNEARVGVMRLIVGGGRATEDSESKGSVIVGVRTLSEGGCVGNFSREQVELFCVNNLINCSLESNEEFIFMEFRFALRDNGMRAAFQLLHMVLEHNVWLEDAFDRATQLYLSYYRSIPKSLERSTAHKLMLAMLNHDERFVEPSPHSLQKLTLQSVKDAVMNQFVGDNMEVSIVGDFTEEEVESCVLDYLGTVSAPKSSKTQEHIEKISFLPFPSDLHFQQVYIKDTDERACAYIAGPAPNRWGFATEGNDLFNVIRSSSGDAQVSESANTDLTERKHNDVRSHSLFFGITLSLLAEIINSRLFTTVRDSMGLTYDVSFELNLFDKLDLGWYVIAVTSTPSKVHKAVDACKGVLRGLHSNKIVERELDRAKRTLLMKHEAETKTNAYWLGLLAHLQSSSVPRKEISCIKELTMLYESATIEDLYLAYEHLKVDESSLFACIGIAGAESGEETTDDELDMGLHGMGPIGGRGLSTMTRPTT.

The transit peptide at 1–136 (MASFPSPPLA…AKIRRRHVLH (136 aa)) directs the protein to the chloroplast. Histidine 228 provides a ligand contact to Zn(2+). Glutamate 231 serves as the catalytic Proton acceptor. Position 232 (histidine 232) interacts with Zn(2+). The active site involves glutamate 302. Residue glutamate 309 participates in Zn(2+) binding.

The protein belongs to the peptidase M16 family. It depends on Zn(2+) as a cofactor. In terms of tissue distribution, widely expressed.

It is found in the plastid. Its subcellular location is the chloroplast stroma. Its function is as follows. Cleaves presequences (transit peptides) from chloroplastic protein precursors. Initially recognizes a precursor by binding to the C-terminus of its transit peptide and then removes the transit peptide in a single endoproteolytic step. In a next step, pursues the cleavage of transit peptide to a subfragment form. The sequence is that of Stromal processing peptidase, chloroplastic from Oryza sativa subsp. indica (Rice).